Here is a 608-residue protein sequence, read N- to C-terminus: DNA mismatch repair protein MutL (608 aa).

A disordered region spans residues 363 to 397 (ASLAMARKPDPPRFHETARPQPDPRHTPGTESVSV). Basic and acidic residues predominate over residues 369–390 (RKPDPPRFHETARPQPDPRHTP).

It belongs to the DNA mismatch repair MutL/HexB family.

Functionally, this protein is involved in the repair of mismatches in DNA. It is required for dam-dependent methyl-directed DNA mismatch repair. May act as a 'molecular matchmaker', a protein that promotes the formation of a stable complex between two or more DNA-binding proteins in an ATP-dependent manner without itself being part of a final effector complex. The polypeptide is DNA mismatch repair protein MutL (Pelobacter propionicus (strain DSM 2379 / NBRC 103807 / OttBd1)).